The primary structure comprises 465 residues: A-type ATP synthase subunit B (465 aa).

It belongs to the ATPase alpha/beta chains family. As to quaternary structure, has multiple subunits with at least A(3), B(3), C, D, E, F, H, I and proteolipid K(x).

The protein localises to the cell membrane. Functionally, component of the A-type ATP synthase that produces ATP from ADP in the presence of a proton gradient across the membrane. The B chain is a regulatory subunit. This Thermococcus onnurineus (strain NA1) protein is A-type ATP synthase subunit B.